The chain runs to 353 residues: Holliday junction branch migration complex subunit RuvB (353 aa).

Residues 4–185 are large ATPase domain (RuvB-L); it reads ADRLITAVGG…FGIVQRLEFY (182 aa). ATP is bound by residues I24, R25, G66, K69, T70, T71, 132-134, R175, Y185, and R222; that span reads EDF. T70 contacts Mg(2+). A small ATPAse domain (RuvB-S) region spans residues 186-256; the sequence is NIADLSTIVA…TADKALNLLD (71 aa). Residues 259 to 353 are head domain (RuvB-H); that stretch reads EHGFDHQDRR…GEFVDDAADL (95 aa). DNA contacts are provided by R295, R314, and R319.

It belongs to the RuvB family. Homohexamer. Forms an RuvA(8)-RuvB(12)-Holliday junction (HJ) complex. HJ DNA is sandwiched between 2 RuvA tetramers; dsDNA enters through RuvA and exits via RuvB. An RuvB hexamer assembles on each DNA strand where it exits the tetramer. Each RuvB hexamer is contacted by two RuvA subunits (via domain III) on 2 adjacent RuvB subunits; this complex drives branch migration. In the full resolvosome a probable DNA-RuvA(4)-RuvB(12)-RuvC(2) complex forms which resolves the HJ.

It is found in the cytoplasm. It catalyses the reaction ATP + H2O = ADP + phosphate + H(+). Functionally, the RuvA-RuvB-RuvC complex processes Holliday junction (HJ) DNA during genetic recombination and DNA repair, while the RuvA-RuvB complex plays an important role in the rescue of blocked DNA replication forks via replication fork reversal (RFR). RuvA specifically binds to HJ cruciform DNA, conferring on it an open structure. The RuvB hexamer acts as an ATP-dependent pump, pulling dsDNA into and through the RuvAB complex. RuvB forms 2 homohexamers on either side of HJ DNA bound by 1 or 2 RuvA tetramers; 4 subunits per hexamer contact DNA at a time. Coordinated motions by a converter formed by DNA-disengaged RuvB subunits stimulates ATP hydrolysis and nucleotide exchange. Immobilization of the converter enables RuvB to convert the ATP-contained energy into a lever motion, pulling 2 nucleotides of DNA out of the RuvA tetramer per ATP hydrolyzed, thus driving DNA branch migration. The RuvB motors rotate together with the DNA substrate, which together with the progressing nucleotide cycle form the mechanistic basis for DNA recombination by continuous HJ branch migration. Branch migration allows RuvC to scan DNA until it finds its consensus sequence, where it cleaves and resolves cruciform DNA. This is Holliday junction branch migration complex subunit RuvB from Pseudomonas syringae pv. tomato (strain ATCC BAA-871 / DC3000).